The chain runs to 162 residues: Ribosome-binding factor A (162 aa).

Positions 123–162 are disordered; sequence VARVAAGASPAGDPDPYKEPRVEDADDAEVDEPSRSRQAD. Low complexity predominate over residues 125-136; sequence RVAAGASPAGDP.

The protein belongs to the RbfA family. Monomer. Binds 30S ribosomal subunits, but not 50S ribosomal subunits or 70S ribosomes.

The protein localises to the cytoplasm. Functionally, one of several proteins that assist in the late maturation steps of the functional core of the 30S ribosomal subunit. Associates with free 30S ribosomal subunits (but not with 30S subunits that are part of 70S ribosomes or polysomes). Required for efficient processing of 16S rRNA. May interact with the 5'-terminal helix region of 16S rRNA. This Rhodococcus opacus (strain B4) protein is Ribosome-binding factor A.